The primary structure comprises 772 residues: Probable serine/threonine-protein kinase HAL5-like (772 aa).

Disordered regions lie at residues 1–102 (MASS…TRHV), 115–165 (RAGT…EPNN), 185–241 (IDTQ…RSNT), and 344–396 (NADE…SANV). Positions 9 to 19 (SEPRISRESSL) are enriched in basic and acidic residues. Composition is skewed to low complexity over residues 20-33 (KRSL…KGLF) and 41-59 (NTGP…ISTP). Basic and acidic residues predominate over residues 66–86 (TKDKQDRLKNLAANKEKELQT). Over residues 146 to 158 (RQSSSNRSSSFSN) the composition is skewed to low complexity. Residues 202–212 (RRSRSTQRKRL) show a composition bias toward basic residues. Residues 454–758 (GKSIGIIGQG…VDSLLKSSWM (305 aa)) form the Protein kinase domain. ATP contacts are provided by residues 460 to 468 (IGQGAYGVV) and Lys-498. Asp-609 acts as the Proton acceptor in catalysis.

The protein belongs to the protein kinase superfamily. CAMK Ser/Thr protein kinase family. NPR/HAL subfamily. HAL5 sub-subfamily.

The enzyme catalyses L-seryl-[protein] + ATP = O-phospho-L-seryl-[protein] + ADP + H(+). The catalysed reaction is L-threonyl-[protein] + ATP = O-phospho-L-threonyl-[protein] + ADP + H(+). The polypeptide is Probable serine/threonine-protein kinase HAL5-like (Kluyveromyces lactis (strain ATCC 8585 / CBS 2359 / DSM 70799 / NBRC 1267 / NRRL Y-1140 / WM37) (Yeast)).